A 672-amino-acid chain; its full sequence is APC membrane recruitment protein 2 (672 aa).

The span at 1 to 21 (METGRSRGGGAAVSERGGGAR) shows a compositional bias: gly residues. Disordered regions lie at residues 1 to 23 (METG…ARAG), 74 to 360 (TMPS…DPSA), and 443 to 560 (MLSQ…DALC). Over residues 142 to 158 (GSLASSSVAKSHSFFSL) the composition is skewed to low complexity. Residue S154 is modified to Phosphoserine. Basic and acidic residues-rich tracts occupy residues 163–175 (GRSE…HAEA) and 201–210 (RGKEEEEKAV). 3 positions are modified to phosphoserine: S223, S227, and S244. A compositionally biased stretch (basic and acidic residues) spans 230–254 (CVKEEPPRAARRPDSPGQDASRHAA). Low complexity predominate over residues 255–269 (GEPAGGEQAPASAES). S284 bears the Phosphoserine mark. A compositionally biased stretch (basic and acidic residues) spans 289–303 (SRGEDAEGHRREEKP). Over residues 343-354 (ASAVPDPSSVDP) the composition is skewed to low complexity. A phosphoserine mark is found at S356 and S359. The segment covering 446–457 (QTEDQGQGTQEG) has biased composition (low complexity). 2 stretches are compositionally biased toward basic and acidic residues: residues 478-488 (RCGEAAKDMSS) and 502-516 (QQKE…EHQE).

Belongs to the Amer family. In terms of assembly, interacts with APC.

The protein resides in the cell membrane. In terms of biological role, negative regulator of the canonical Wnt signaling pathway involved in neuroectodermal patterning. Acts by specifically binding phosphatidylinositol 4,5-bisphosphate (PtdIns(4,5)P2), translocating to the cell membrane and interacting with key regulators of the canonical Wnt signaling pathway, such as components of the beta-catenin destruction complex. The chain is APC membrane recruitment protein 2 (Amer2) from Mus musculus (Mouse).